Consider the following 611-residue polypeptide: MPRRKRNAGSSSDGTEDSDFSTDLEHTDSSESDGTSRRSARVTRSSARLSQSSQDSSPVRNLQSFGTEEPAYSTRRVTRSQQQPTPVTPKKYPLRQTRSSGSETEQVVDFSDRETKNTADHDESPPRTPTGNAPSSESDIDISSPNVSHDESIAKDMSLKDSGSDLSHRPKRRRFHESYNFNMKCPTPGCNSLGHLTGKHERHFSISGCPLYHNLSADECKVRAQSRDKQIEERMLSHRQDDNNRHATRHQAPTERQLRYKEKVAELRKKRNSGLSKEQKEKYMEHRQTYGNTREPLLENLTSEYDLDLFRRAQARASEDLEKLRLQGQITEGSNMIKTIAFGRYELDTWYHSPYPEEYARLGRLYMCEFCLKYMKSQTILRRHMAKCVWKHPPGDEIYRKGSISVFEVDGKKNKIYCQNLCLLAKLFLDHKTLYYDVEPFLFYVMTEADNTGCHLIGYFSKEKNSFLNYNVSCILTMPQYMRQGYGKMLIDFSYLLSKVEEKVGSPERPLSDLGLISYRSYWKEVLLRYLHNFQGKEISIKEISQETAVNPVDIVSTLQALQMLKYWKGKHLVLKRQDLIDEWIAKEAKRSNSNKTMDPSCLKWTPPKGT.

A disordered region spans residues M1–R173. At S10 the chain carries Phosphoserine. The segment covering V42–S57 has biased composition (low complexity). Phosphoserine; by ATR is present on residues S50 and S53. S57 is modified (phosphoserine; by PLK1). The residue at position 64 (S64) is a Phosphoserine. Phosphothreonine; by CDK1 occurs at positions 85 and 88. Over residues Q96 to E105 the composition is skewed to polar residues. S102 is modified (phosphoserine). The residue at position 104 (T104) is a Phosphothreonine. The span at F110 to P125 shows a compositional bias: basic and acidic residues. Residues S111 and S124 each carry the phosphoserine modification. Phosphothreonine is present on T128. Over residues P134 to P145 the composition is skewed to low complexity. Residues S148–H168 are compositionally biased toward basic and acidic residues. Phosphoserine occurs at positions 158, 162, 164, and 178. The CCHHC-type zinc-finger motif lies at H176–E219. N6-acetyllysine is present on residues K199 and K277. K323 participates in a covalent cross-link: Glycyl lysine isopeptide (Lys-Gly) (interchain with G-Cter in SUMO2). The 276-residue stretch at E332 to P607 folds into the MYST-type HAT domain. Residue K338 forms a Glycyl lysine isopeptide (Lys-Gly) (interchain with G-Cter in ubiquitin) linkage. The C2HC MYST-type zinc-finger motif lies at L365–W390. 4 residues coordinate Zn(2+): C368, C371, H384, and C388. K432 is subject to N6-acetyllysine; by autocatalysis. Acetyl-CoA is bound by residues I475 to T477 and R483 to K488. Residue S506 is modified to Phosphoserine. E508 acts as the Proton donor/acceptor in catalysis. Acetyl-CoA is bound by residues S512 and S521.

The protein belongs to the MYST (SAS/MOZ) family. As to quaternary structure, component of the HBO1 complex composed of KAT7/HBO1, MEAF6, ING4 or ING5, and one scaffold subunit: complexes containing BRPF scaffold (BRPF1, BRD1/BRPF2 or BRPF3) direct KAT7/HBO1 specificity towards H3K14ac, while complexes containing JADE scaffold (JADE1, JADE2 and JADE3) mediate acetylation of histone H4. Interacts with MCM2 and ORC1. Interacts with the androgen receptor (AR); in the presence of dihydrotestosterone. Interacts with CDT1. Interacts with MAP2K1 and CUL1. Interacts with p53/TP53; leading to inhibit histone acetyltransferase activity. Interacts with MIS18BP1. In terms of processing, phosphorylated at Ser-50 and Ser-53 by ATR in response to DNA damage, promoting its ubiquitination by the CRL4(DDB2) complex and subsequent degradation. Phosphorylation at Ser-50 and Ser-53 by ATR in response to ultraviolet-induced DNA, promotes localization to DNA damage sites. Phosphorylation at Ser-57 by PLK1 during mitosis seems important for prereplicative complex formation and DNA replication licensing, and requires prior phosphorylation at Thr-85 and Thr-88 by CDK1. Phosphorylated by MAP2K1, which accelerates its degradation. Post-translationally, ubiquitinated at Lys-338, leading to proteasomal degradation. Ubiquitinated by the CRL4(DDB2) complex following phosphorylation by ATR, leading to its subsequent degradation. Autoacetylation at Lys-432 is required for proper function. As to expression, ubiquitously expressed, with highest levels in testis.

It is found in the nucleus. The protein resides in the chromosome. The protein localises to the centromere. Its subcellular location is the cytoplasm. It localises to the cytosol. The catalysed reaction is L-lysyl-[histone] + acetyl-CoA = N(6)-acetyl-L-lysyl-[histone] + CoA + H(+). With respect to regulation, histone acetyltransferase activity is inhibited by GMNN in the context of a complex with CDT1, inhibiting histone H4 acetylation and DNA replication licensing. Selectively inhibited by WM-3835 (N'-(4-fluoro-5-methyl-[1,1'-biphenyl]-3-carbonyl)-3- hydroxybenzenesulfonohydrazide) inhibitor. Its function is as follows. Catalytic subunit of histone acetyltransferase HBO1 complexes, which specifically mediate acetylation of histone H3 at 'Lys-14' (H3K14ac), thereby regulating various processes, such as gene transcription, protein ubiquitination, immune regulation, stem cell pluripotent and self-renewal maintenance and embryonic development. Some complexes also catalyze acetylation of histone H4 at 'Lys-5', 'Lys-8' and 'Lys-12' (H4K5ac, H4K8ac and H4K12ac, respectively), regulating DNA replication initiation, regulating DNA replication initiation. Specificity of the HBO1 complexes is determined by the scaffold subunit: complexes containing BRPF scaffold (BRPF1, BRD1/BRPF2 or BRPF3) direct KAT7/HBO1 specificity towards H3K14ac, while complexes containing JADE (JADE1, JADE2 and JADE3) scaffold direct KAT7/HBO1 specificity towards histone H4. H3K14ac promotes transcriptional elongation by facilitating the processivity of RNA polymerase II. Acts as a key regulator of hematopoiesis by forming a complex with BRD1/BRPF2, directing KAT7/HBO1 specificity towards H3K14ac and promoting erythroid differentiation. H3K14ac is also required for T-cell development. KAT7/HBO1-mediated acetylation facilitates two consecutive steps, licensing and activation, in DNA replication initiation: H3K14ac facilitates the activation of replication origins, and histone H4 acetylation (H4K5ac, H4K8ac and H4K12ac) facilitates chromatin loading of MCM complexes, promoting DNA replication licensing. Acts as a positive regulator of centromeric CENPA assembly: recruited to centromeres and mediates histone acetylation, thereby preventing centromere inactivation mediated by SUV39H1, possibly by increasing histone turnover/exchange. Involved in nucleotide excision repair: phosphorylation by ATR in response to ultraviolet irradiation promotes its localization to DNA damage sites, where it mediates histone acetylation to facilitate recruitment of XPC at the damaged DNA sites. Acts as an inhibitor of NF-kappa-B independently of its histone acetyltransferase activity. Functionally, plays a central role in the maintenance of leukemia stem cells in acute myeloid leukemia (AML). Acts by mediating acetylation of histone H3 at 'Lys-14' (H3K14ac), thereby facilitating the processivity of RNA polymerase II to maintain the high expression of key genes, such as HOXA9 and HOXA10 that help to sustain the functional properties of leukemia stem cells. In Homo sapiens (Human), this protein is Histone acetyltransferase KAT7.